The primary structure comprises 193 residues: Biphenyl dioxygenase subunit beta (193 aa).

This sequence belongs to the bacterial ring-hydroxylating dioxygenase beta subunit family. In terms of assembly, heterohexamer consisting of 3 BphA1 subunits and 3 BphA2 subunits. A ferredoxin (BphA3) and a ferredoxin reductase (BphA4) must be present to obtain activity.

It carries out the reaction biphenyl + NADH + O2 + H(+) = (2R,3S)-3-phenylcyclohexa-3,5-diene-1,2-diol + NAD(+). The protein operates within xenobiotic degradation; biphenyl degradation; 2-hydroxy-2,4-pentadienoate and benzoate from biphenyl: step 1/4. Functionally, the beta subunit may be responsible for the substrate specificity of the enzyme. The polypeptide is Biphenyl dioxygenase subunit beta (bphA2) (Pseudomonas sp. (strain KKS102)).